The primary structure comprises 307 residues: Lipid droplet-associated hydrolase (307 aa).

Serine 119 acts as the Nucleophile in catalysis. The tract at residues 157 to 200 (GWVFTKVAMPLYSVFGYIFFSFFNFLPVWLRLMLIQIYFLIFSI) is potential amphipathic helix required for binding to lipid droplets. 2 helical membrane passes run 166-186 (PLYSVFGYIFFSFFNFLPVWL) and 188-208 (LMLIQIYFLIFSIPRQFLGTA). Active-site charge relay system residues include aspartate 254 and histidine 283.

This sequence belongs to the AB hydrolase superfamily. LDAH family. In terms of assembly, interacts with the juvenile hormone hydrolase enzymes Jheh1 and Jheh2. Also interacts with Hmu, Cpr, Gp93 and Pvr. As to expression, expressed in accessory glands.

The protein localises to the lipid droplet. The protein resides in the endoplasmic reticulum membrane. The catalysed reaction is a cholesterol ester + H2O = cholesterol + a fatty acid + H(+). Its function is as follows. Probable serine lipid hydrolase associated with lipid droplets. Appears to lack or have very low cholesterol esterase activity. Appears to lack triglyceride lipase activity. Involved in cholesterol and triglyceride homeostasis; stimulates cellular triglyceride accumulation and cellular cholesterol release. Involved in negatively regulating juvenile hormone (JH) and possibly, insulin signaling activities such as triacylglycerols (TAG) storage, and thereby plays a role in the endocrine regulation of organismal growth and survival. Likely functions by enhancing the activity of the JH hydrolase enzymes Jheh1 and Jheh2. Required for lipid droplet positioning and fat storage. This is Lipid droplet-associated hydrolase from Drosophila melanogaster (Fruit fly).